Consider the following 182-residue polypeptide: NADH-quinone oxidoreductase subunit B 2 (182 aa).

[4Fe-4S] cluster-binding residues include cysteine 47, cysteine 48, cysteine 113, and cysteine 142.

This sequence belongs to the complex I 20 kDa subunit family. In terms of assembly, NDH-1 is composed of 14 different subunits. Subunits NuoB, C, D, E, F, and G constitute the peripheral sector of the complex. It depends on [4Fe-4S] cluster as a cofactor.

It localises to the cell inner membrane. The enzyme catalyses a quinone + NADH + 5 H(+)(in) = a quinol + NAD(+) + 4 H(+)(out). In terms of biological role, NDH-1 shuttles electrons from NADH, via FMN and iron-sulfur (Fe-S) centers, to quinones in the respiratory chain. The immediate electron acceptor for the enzyme in this species is believed to be ubiquinone. Couples the redox reaction to proton translocation (for every two electrons transferred, four hydrogen ions are translocated across the cytoplasmic membrane), and thus conserves the redox energy in a proton gradient. The chain is NADH-quinone oxidoreductase subunit B 2 from Anaeromyxobacter sp. (strain K).